A 158-amino-acid polypeptide reads, in one-letter code: uncharacterized protein (158 aa).

A disordered region spans residues 77 to 132 (AIKRNKIGGSKRSEVHSNRSKNYSSKKFRSQKCRRSRQKKRQNKKPNNSRFISSNK). Basic residues predominate over residues 100-120 (SSKKFRSQKCRRSRQKKRQNK).

This is an uncharacterized protein from Acanthamoeba polyphaga mimivirus (APMV).